A 331-amino-acid polypeptide reads, in one-letter code: UPF0329 protein ECU01_0080/ECU01_1530/ECU02_1560/ECU04_0090/ECU08_0010/ECU08_2090 (331 aa).

Positions glutamine 305 to arginine 320 are enriched in basic and acidic residues. The segment at glutamine 305–leucine 331 is disordered. Basic residues predominate over residues arginine 321–leucine 331.

Belongs to the UPF0329 family.

The sequence is that of UPF0329 protein ECU01_0080/ECU01_1530/ECU02_1560/ECU04_0090/ECU08_0010/ECU08_2090 from Encephalitozoon cuniculi (strain GB-M1) (Microsporidian parasite).